The primary structure comprises 85 residues: Large ribosomal subunit protein bL27 (85 aa).

Residues 1–10 (MAQKKGGGST) show a composition bias toward gly residues. The segment at 1-21 (MAQKKGGGSTRNGRDSQPKML) is disordered.

Belongs to the bacterial ribosomal protein bL27 family.

This is Large ribosomal subunit protein bL27 from Leptothrix cholodnii (strain ATCC 51168 / LMG 8142 / SP-6) (Leptothrix discophora (strain SP-6)).